A 153-amino-acid polypeptide reads, in one-letter code: 6,7-dimethyl-8-ribityllumazine synthase (153 aa).

Residues F22, 56–58 (AFE), and 80–82 (AVI) contribute to the 5-amino-6-(D-ribitylamino)uracil site. 85–86 (AT) contacts (2S)-2-hydroxy-3-oxobutyl phosphate. H88 serves as the catalytic Proton donor. F113 serves as a coordination point for 5-amino-6-(D-ribitylamino)uracil. (2S)-2-hydroxy-3-oxobutyl phosphate is bound at residue R127.

This sequence belongs to the DMRL synthase family.

It carries out the reaction (2S)-2-hydroxy-3-oxobutyl phosphate + 5-amino-6-(D-ribitylamino)uracil = 6,7-dimethyl-8-(1-D-ribityl)lumazine + phosphate + 2 H2O + H(+). Its pathway is cofactor biosynthesis; riboflavin biosynthesis; riboflavin from 2-hydroxy-3-oxobutyl phosphate and 5-amino-6-(D-ribitylamino)uracil: step 1/2. Functionally, catalyzes the formation of 6,7-dimethyl-8-ribityllumazine by condensation of 5-amino-6-(D-ribitylamino)uracil with 3,4-dihydroxy-2-butanone 4-phosphate. This is the penultimate step in the biosynthesis of riboflavin. This is 6,7-dimethyl-8-ribityllumazine synthase from Alkaliphilus metalliredigens (strain QYMF).